Reading from the N-terminus, the 506-residue chain is Hexokinase-6 (506 aa).

Residues 6 to 26 (VVGTAVVVCAAAAAAVGVAVV) traverse the membrane as a helical segment. A Hexokinase domain is found at 43–497 (RRAAAVIEEV…SGIGAALLAA (455 aa)). The interval 98–236 (TGDEHGLFYA…GLDMKVTALV (139 aa)) is hexokinase small subdomain. Gly-112, Thr-113, and Asn-114 together coordinate ADP. Thr-202, Lys-203, Asn-237, and Asp-238 together coordinate D-glucose. The hexokinase large subdomain stretch occupies residues 237 to 486 (NDTVGTLAGG…SSVVVKLAND (250 aa)). Thr-261 lines the ADP pocket. D-glucose contacts are provided by Asn-264, Glu-292, and Glu-323. Residue Gly-451 participates in ADP binding.

Belongs to the hexokinase family. Expressed in roots, leaves, flowers, immature seeds and endosperm.

It localises to the plastid. Its subcellular location is the chloroplast outer membrane. The enzyme catalyses a D-hexose + ATP = a D-hexose 6-phosphate + ADP + H(+). The catalysed reaction is D-fructose + ATP = D-fructose 6-phosphate + ADP + H(+). It catalyses the reaction D-glucose + ATP = D-glucose 6-phosphate + ADP + H(+). It functions in the pathway carbohydrate metabolism; hexose metabolism. It participates in carbohydrate degradation; glycolysis; D-glyceraldehyde 3-phosphate and glycerone phosphate from D-glucose: step 1/4. Functionally, fructose and glucose phosphorylating enzyme. Functions as a glucose sensor for plant growth and photosynthesis. The sequence is that of Hexokinase-6 (HXK6) from Oryza sativa subsp. japonica (Rice).